Reading from the N-terminus, the 1551-residue chain is Dual oxidase 1 (1551 aa).

A signal peptide spans 1–21; that stretch reads MGFCLALAWTLLVGAWTPLGA. The Extracellular portion of the chain corresponds to 22 to 596; the sequence is QNPISWEVQR…YFEGSGFGFG (575 aa). The peroxidase-like; mediates peroxidase activity stretch occupies residues 26–593; the sequence is SWEVQRFDGW…VRDYFEGSGF (568 aa). An N-linked (GlcNAc...) asparagine glycan is attached at asparagine 94. A disordered region spans residues 150-172; that stretch reads RWDPETGRSPSNPRDPANQVTGW. Asparagine 342, asparagine 354, asparagine 461, and asparagine 534 each carry an N-linked (GlcNAc...) asparagine glycan. The helical transmembrane segment at 597–617 threads the bilayer; the sequence is VTIGTLCCFPLVSLLSAWIVA. Residues 618-1044 lie on the Cytoplasmic side of the membrane; sequence RLRMRNFKRL…KRFIENYRRH (427 aa). EF-hand domains follow at residues 815–850, 851–886, and 895–930; these read PQDM…FMKG, SPEE…FIEI, and QLAE…HNSE. Positions 828, 830, 832, 834, 839, 864, 866, 868, and 875 each coordinate Ca(2+). The interval 956–1248 is interaction with TXNDC11; sequence YISQDMICPS…GSFALIQLPR (293 aa). Residues 1045–1065 form a helical membrane-spanning segment; it reads IGCVAVFYAIAGGLFLERAYY. Topologically, residues 1066–1080 are extracellular; sequence YAFAAHHTGITDTTR. The chain crosses the membrane as a helical span at residues 1081–1101; it reads VGIILSRGTAASISFMFSYIL. Positions 1087-1269 constitute a Ferric oxidoreductase domain; it reads RGTAASISFM…YGGDKLVSLS (183 aa). The Cytoplasmic portion of the chain corresponds to 1102–1148; that stretch reads LTMCRNLITFLRETFLNRYVPFDAAVDFHRLIASTAIVLTVLHSVGH. The chain crosses the membrane as a helical span at residues 1149 to 1171; that stretch reads VVNVYLFSISPLSVLSCLFPGLF. Over 1172 to 1188 the chain is Extracellular; that stretch reads HDDGSELPQKYYWWFFQ. Residues 1189-1209 traverse the membrane as a helical segment; the sequence is TVPGLTGVVLLLILAIMYVFA. Topologically, residues 1210–1226 are cytoplasmic; that stretch reads SHHFRRRSFRGFWLTHH. A helical membrane pass occupies residues 1227-1247; the sequence is LYILLYVLLIIHGSFALIQLP. Position 1248 (arginine 1248) is a topological domain, extracellular. Residues 1249–1269 form a helical membrane-spanning segment; the sequence is FHIFFLVPAIIYGGDKLVSLS. The FAD-binding FR-type domain occupies 1270–1376; the sequence is RKKVEISVVK…DGPFGEGHQE (107 aa). The Cytoplasmic segment spans residues 1270-1551; that stretch reads RKKVEISVVK…THFSHHYENF (282 aa).

The protein in the N-terminal section; belongs to the peroxidase family. As to quaternary structure, interacts with TXNDC11, TPO and CYBA. Post-translationally, N-glycosylated. As to expression, expressed in thyrocytes and tracheal surface epithelial cells (at protein level). Expressed in thyroid, trachea, bronchium, and to a lower extent, in placenta, testis, prostate, pancreas and heart.

Its subcellular location is the apical cell membrane. It catalyses the reaction NADH + O2 + H(+) = H2O2 + NAD(+). The enzyme catalyses NADPH + O2 + H(+) = H2O2 + NADP(+). It functions in the pathway hormone biosynthesis; thyroid hormone biosynthesis. Its activity is regulated as follows. The NADPH oxidase activity is calcium-dependent. Peroxidase activity is inhibited by aminobenzohydrazide. Generates hydrogen peroxide which is required for the activity of thyroid peroxidase/TPO and lactoperoxidase/LPO. Plays a role in thyroid hormones synthesis and lactoperoxidase-mediated antimicrobial defense at the surface of mucosa. May have its own peroxidase activity through its N-terminal peroxidase-like domain. The polypeptide is Dual oxidase 1 (DUOX1) (Homo sapiens (Human)).